We begin with the raw amino-acid sequence, 194 residues long: Large ribosomal subunit protein bL17 (194 aa).

Positions 126 to 194 are disordered; it reads AEPKQTKART…SPEQTNKQEE (69 aa). The segment covering 131 to 140 has biased composition (basic residues); the sequence is TKARTRRGKG. Composition is skewed to polar residues over residues 144–161 and 181–194; these read ATTT…QDMA and LDTQ…KQEE.

The protein belongs to the bacterial ribosomal protein bL17 family. Part of the 50S ribosomal subunit. Contacts protein L32.

This Amoebophilus asiaticus (strain 5a2) protein is Large ribosomal subunit protein bL17.